Here is a 345-residue protein sequence, read N- to C-terminus: DNA N(6)-methyladenine demethylase ALKBH1A (345 aa).

Residues tryptophan 179 and 186 to 188 (FDW) contribute to the substrate site. Residues 225–345 (RPEGAIVNYF…RININIRQVF (121 aa)) enclose the Fe2OG dioxygenase domain. 232–234 (NYF) serves as a coordination point for 2-oxoglutarate. The Fe cation site is built by histidine 243, aspartate 245, and histidine 299. 336 to 342 (RININIR) provides a ligand contact to 2-oxoglutarate.

It belongs to the alkB family. Fe(2+) serves as cofactor. In terms of tissue distribution, mostly expressed in siliques, to a lower extent in roots, seedlings and rosette leaves, but barely in cauline leaves, stems and flowers.

Its subcellular location is the nucleus. It localises to the cytoplasm. The enzyme catalyses an N(6)-methyl-2'-deoxyadenosine in DNA + 2-oxoglutarate + O2 = a 2'-deoxyadenosine in DNA + formaldehyde + succinate + CO2. Its function is as follows. Dioxygenase that catalyzes DNA N(6)-methyladenine (6 mA) demethylation to modulate gene expression and regulate seed germination. This Arabidopsis thaliana (Mouse-ear cress) protein is DNA N(6)-methyladenine demethylase ALKBH1A.